We begin with the raw amino-acid sequence, 526 residues long: NAD(P)H-quinone oxidoreductase chain 4 (526 aa).

A run of 13 helical transmembrane segments spans residues phenylalanine 5–isoleucine 25, tryptophan 32–serine 52, leucine 87–leucine 107, methionine 111–aspartate 131, valine 133–tryptophan 153, phenylalanine 165–phenylalanine 185, phenylalanine 211–leucine 231, threonine 239–isoleucine 259, phenylalanine 273–phenylalanine 293, isoleucine 302–leucine 320, glutamine 331–aspartate 351, isoleucine 371–alanine 393, and leucine 414–leucine 434.

The protein belongs to the complex I subunit 4 family.

The protein resides in the cell inner membrane. The catalysed reaction is a plastoquinone + NADH + (n+1) H(+)(in) = a plastoquinol + NAD(+) + n H(+)(out). It carries out the reaction a plastoquinone + NADPH + (n+1) H(+)(in) = a plastoquinol + NADP(+) + n H(+)(out). Functionally, NDH-1 shuttles electrons from NAD(P)H, via FMN and iron-sulfur (Fe-S) centers, to quinones in the respiratory chain. The immediate electron acceptor for the enzyme in this species is believed to be plastoquinone. Couples the redox reaction to proton translocation (for every two electrons transferred, four hydrogen ions are translocated across the cytoplasmic membrane), and thus conserves the redox energy in a proton gradient. This Gloeobacter violaceus (strain ATCC 29082 / PCC 7421) protein is NAD(P)H-quinone oxidoreductase chain 4.